The primary structure comprises 441 residues: MAAVAVVGAGKSGQAAARWLALGGRRVVLWDGRDSEALRVVAGALAPFGVEAVLGREFVPEEPDLSLVVVSPGVRWDHPGLVAARARGVTVTGEVGLAWESLSHRRWLCVTGTNGKTTTTALVGHILKTAGLRAPVCGNIGRPVTDLLLEPEDYDWIVAELSSFQIESAQGIRPEVAVWTTFTPDHLNRHGTLERYAAIKAGLLMQARRAVLNGDDAYLGARRSAWPDAWWTSTQAPAAVSLAGKDICIENRPVLPVSAVRLPGAHNLQNVLMAVAACHLTGVGDAAIASGVASFIGVPHRLEAVGEYRGVRFINDSKATNYDAALVGLTAVPAPSVLIAGGQAKTGESGPWLRAIAERCASVVLIGEAAPLFEKWLRAQDYRAVYTAHTLERAVPMAFEQARAQGAQCVLFSPACASFDQFRNFEERGDRFRALIAALAS.

Residue 112–118 participates in ATP binding; that stretch reads GTNGKTT.

The protein belongs to the MurCDEF family.

The protein resides in the cytoplasm. It carries out the reaction UDP-N-acetyl-alpha-D-muramoyl-L-alanine + D-glutamate + ATP = UDP-N-acetyl-alpha-D-muramoyl-L-alanyl-D-glutamate + ADP + phosphate + H(+). It participates in cell wall biogenesis; peptidoglycan biosynthesis. Its function is as follows. Cell wall formation. Catalyzes the addition of glutamate to the nucleotide precursor UDP-N-acetylmuramoyl-L-alanine (UMA). The chain is UDP-N-acetylmuramoylalanine--D-glutamate ligase from Gloeobacter violaceus (strain ATCC 29082 / PCC 7421).